A 268-amino-acid chain; its full sequence is Imidazole glycerol phosphate synthase subunit HisF (268 aa).

Active-site residues include D12 and D131.

This sequence belongs to the HisA/HisF family. Heterodimer of HisH and HisF.

Its subcellular location is the cytoplasm. The enzyme catalyses 5-[(5-phospho-1-deoxy-D-ribulos-1-ylimino)methylamino]-1-(5-phospho-beta-D-ribosyl)imidazole-4-carboxamide + L-glutamine = D-erythro-1-(imidazol-4-yl)glycerol 3-phosphate + 5-amino-1-(5-phospho-beta-D-ribosyl)imidazole-4-carboxamide + L-glutamate + H(+). It functions in the pathway amino-acid biosynthesis; L-histidine biosynthesis; L-histidine from 5-phospho-alpha-D-ribose 1-diphosphate: step 5/9. IGPS catalyzes the conversion of PRFAR and glutamine to IGP, AICAR and glutamate. The HisF subunit catalyzes the cyclization activity that produces IGP and AICAR from PRFAR using the ammonia provided by the HisH subunit. The chain is Imidazole glycerol phosphate synthase subunit HisF from Methanoregula boonei (strain DSM 21154 / JCM 14090 / 6A8).